Here is a 175-residue protein sequence, read N- to C-terminus: UPF0398 protein SPH_0478 (175 aa).

The protein belongs to the UPF0398 family.

The chain is UPF0398 protein SPH_0478 from Streptococcus pneumoniae (strain Hungary19A-6).